The sequence spans 447 residues: Tyrosine aminotransferase (447 aa).

Lysine 273 carries the post-translational modification N6-(pyridoxal phosphate)lysine. Serine 441 is subject to Phosphoserine.

Belongs to the class-I pyridoxal-phosphate-dependent aminotransferase family. Homodimer. Requires pyridoxal 5'-phosphate as cofactor.

The catalysed reaction is L-tyrosine + 2-oxoglutarate = 3-(4-hydroxyphenyl)pyruvate + L-glutamate. It participates in amino-acid degradation; L-phenylalanine degradation; acetoacetate and fumarate from L-phenylalanine: step 2/6. Functionally, transaminase involved in tyrosine breakdown. Converts tyrosine to p-hydroxyphenylpyruvate. Can catalyze the reverse reaction, using glutamic acid, with 2-oxoglutarate as cosubstrate (in vitro). Has much lower affinity and transaminase activity for phenylalanine. This is Tyrosine aminotransferase (TAT) from Bos taurus (Bovine).